A 433-amino-acid chain; its full sequence is AP-2 complex subunit mu (433 aa).

The region spanning 168 to 432 (RNELFLDVLE…IGRSGIYETR (265 aa)) is the MHD domain. A 1,2-diacyl-sn-glycero-3-phospho-(1D-myo-inositol-3,4,5-trisphosphate) is bound by residues Lys-339, Lys-343, and Lys-352.

This sequence belongs to the adaptor complexes medium subunit family. Adaptor protein complex 2 (AP-2) is a heterotetramer composed of two large adaptins (alpha-type subunit and beta-type subunit), a medium adaptin (mu-type subunit) and a small adaptin (sigma-type subunit).

It localises to the cell membrane. The protein resides in the membrane. The protein localises to the coated pit. Functionally, component of the adaptor complexes which link clathrin to receptors in coated vesicles. Clathrin-associated protein complexes are believed to interact with the cytoplasmic tails of membrane proteins, leading to their selection and concentration. AP50 is a subunit of the plasma membrane adaptor. The complex binds polyphosphoinositide-containing lipids. The sequence is that of AP-2 complex subunit mu (AP2M1) from Gallus gallus (Chicken).